The chain runs to 335 residues: Protein STRICTOSIDINE SYNTHASE-LIKE 12 (335 aa).

The first 22 residues, 1 to 22 (MTSFCSMISLLLLLSLSSAVFS), serve as a signal peptide directing secretion. N80 is a glycosylation site (N-linked (GlcNAc...) asparagine).

This sequence belongs to the strictosidine synthase family.

The protein localises to the vacuole. The enzyme catalyses 3alpha(S)-strictosidine + H2O = secologanin + tryptamine. It participates in alkaloid biosynthesis; 3alpha(S)-strictosidine biosynthesis; 3alpha(S)-strictosidine from secologanin and tryptamine: step 1/1. Its function is as follows. Catalyzes the stereospecific condensation of tryptamine with secologanin to form strictosidine, the key intermediate of indole alkaloid biosynthesis. The polypeptide is Protein STRICTOSIDINE SYNTHASE-LIKE 12 (Arabidopsis thaliana (Mouse-ear cress)).